Reading from the N-terminus, the 227-residue chain is Protein rapunzel (227 aa).

The chain crosses the membrane as a helical span at residues 179–196 (LAYLFCIGFIALMGYYGI).

It localises to the membrane. This chain is Protein rapunzel, found in Danio rerio (Zebrafish).